The primary structure comprises 132 residues: DNA-directed RNA polymerase subunit omega (132 aa).

This sequence belongs to the RNA polymerase subunit omega family. As to quaternary structure, the RNAP catalytic core consists of 2 alpha, 1 beta, 1 beta' and 1 omega subunit. When a sigma factor is associated with the core the holoenzyme is formed, which can initiate transcription.

It catalyses the reaction RNA(n) + a ribonucleoside 5'-triphosphate = RNA(n+1) + diphosphate. Functionally, promotes RNA polymerase assembly. Latches the N- and C-terminal regions of the beta' subunit thereby facilitating its interaction with the beta and alpha subunits. This is DNA-directed RNA polymerase subunit omega from Ehrlichia ruminantium (strain Welgevonden).